Reading from the N-terminus, the 158-residue chain is Cyclic pyranopterin monophosphate synthase (158 aa).

Substrate-binding positions include 75–77 and 113–114; these read LCH and ME. Aspartate 128 is an active-site residue.

This sequence belongs to the MoaC family. In terms of assembly, homohexamer; trimer of dimers.

It carries out the reaction (8S)-3',8-cyclo-7,8-dihydroguanosine 5'-triphosphate = cyclic pyranopterin phosphate + diphosphate. It participates in cofactor biosynthesis; molybdopterin biosynthesis. Its function is as follows. Catalyzes the conversion of (8S)-3',8-cyclo-7,8-dihydroguanosine 5'-triphosphate to cyclic pyranopterin monophosphate (cPMP). The chain is Cyclic pyranopterin monophosphate synthase from Azorhizobium caulinodans (strain ATCC 43989 / DSM 5975 / JCM 20966 / LMG 6465 / NBRC 14845 / NCIMB 13405 / ORS 571).